A 501-amino-acid polypeptide reads, in one-letter code: Na(+)/H(+) antiporter NhaB (501 aa).

11 consecutive transmembrane segments (helical) span residues 24-44, 46-66, 90-110, 145-165, 206-226, 239-259, 302-319, 351-371, 395-415, 450-470, and 478-498; these read VILL…PGVA, WLLI…YPLL, VLTN…IYFM, FLDA…FFSV, LLMH…VGEP, FAGF…AGLA, ALWI…GLAF, FQES…VAVI, MFFI…VATV, VATP…IAPL, and MVIM…YMVT.

It belongs to the NhaB Na(+)/H(+) (TC 2.A.34) antiporter family.

The protein resides in the cell inner membrane. It catalyses the reaction 2 Na(+)(in) + 3 H(+)(out) = 2 Na(+)(out) + 3 H(+)(in). In terms of biological role, na(+)/H(+) antiporter that extrudes sodium in exchange for external protons. The sequence is that of Na(+)/H(+) antiporter NhaB from Marinobacter nauticus (strain ATCC 700491 / DSM 11845 / VT8) (Marinobacter aquaeolei).